A 279-amino-acid chain; its full sequence is MKILIMGAFGFLGSRLTSYFESRHTVIGLARKRNNEATINNIIYTTENNWIEKILEFEPNIIINTIACYGRHNEPATALIESNILMPIRVLESISSLDAVFINCGTSLPPNTSLYAYTKQKANELAAAIIDKVCGKYIELKLEHFYGAFDGDDKFTSMVIRRCLSNQPVKLTSGLQQRDFLYIKDLLTAFDCIISNVNNFPKFHSIEVGSGEAISIREYVDTVKNITKSNSIIEFGVVKERVNELMYSCADIAELEKIGWKREFSLVDALTEIIEEEGK.

The active-site Proton acceptor is the Tyr115.

This sequence belongs to the NAD(P)-dependent epimerase/dehydratase family.

It carries out the reaction CDP-alpha-D-paratose + NADP(+) = CDP-4-dehydro-3,6-dideoxy-alpha-D-glucose + NADPH + H(+). The protein operates within nucleotide-sugar biosynthesis; CDP-3,6-dideoxy-D-mannose biosynthesis; CDP-3,6-dideoxy-D-mannose from CTP and alpha-D-glucose 1-phosphate: step 4/5. Catalyzes synthesis of paratose and tyvelose, unusual 3,6-dideoxyhexose sugars that form part of the O-antigen in the lipopolysaccharides of several enteric bacteria. The polypeptide is CDP-paratose synthase (rfbS) (Salmonella typhi).